Reading from the N-terminus, the 260-residue chain is tRNA1(Val) (adenine(37)-N6)-methyltransferase (260 aa).

It belongs to the methyltransferase superfamily. tRNA (adenine-N(6)-)-methyltransferase family.

Its subcellular location is the cytoplasm. It carries out the reaction adenosine(37) in tRNA1(Val) + S-adenosyl-L-methionine = N(6)-methyladenosine(37) in tRNA1(Val) + S-adenosyl-L-homocysteine + H(+). Specifically methylates the adenine in position 37 of tRNA(1)(Val) (anticodon cmo5UAC). In Serratia proteamaculans (strain 568), this protein is tRNA1(Val) (adenine(37)-N6)-methyltransferase.